The chain runs to 68 residues: ATP synthase F(0) complex subunit 8 (68 aa).

A helical transmembrane segment spans residues 8–21; the sequence is VWPTMITPMLLTLF. An N6-acetyllysine; alternate modification is found at lysine 54. Lysine 54 carries the post-translational modification N6-succinyllysine; alternate. An N6-acetyllysine modification is found at lysine 57.

Belongs to the ATPase protein 8 family. In terms of assembly, component of the ATP synthase complex composed at least of ATP5F1A/subunit alpha, ATP5F1B/subunit beta, ATP5MC1/subunit c (homooctomer), MT-ATP6/subunit a, MT-ATP8/subunit 8, ATP5ME/subunit e, ATP5MF/subunit f, ATP5MG/subunit g, ATP5MK/subunit k, ATP5MJ/subunit j, ATP5F1C/subunit gamma, ATP5F1D/subunit delta, ATP5F1E/subunit epsilon, ATP5PF/subunit F6, ATP5PB/subunit b, ATP5PD/subunit d, ATP5PO/subunit OSCP. ATP synthase complex consists of a soluble F(1) head domain (subunits alpha(3) and beta(3)) - the catalytic core - and a membrane F(0) domain - the membrane proton channel (subunits c, a, 8, e, f, g, k and j). These two domains are linked by a central stalk (subunits gamma, delta, and epsilon) rotating inside the F1 region and a stationary peripheral stalk (subunits F6, b, d, and OSCP). Interacts with PRICKLE3.

The protein resides in the mitochondrion membrane. Functionally, subunit 8, of the mitochondrial membrane ATP synthase complex (F(1)F(0) ATP synthase or Complex V) that produces ATP from ADP in the presence of a proton gradient across the membrane which is generated by electron transport complexes of the respiratory chain. ATP synthase complex consist of a soluble F(1) head domain - the catalytic core - and a membrane F(1) domain - the membrane proton channel. These two domains are linked by a central stalk rotating inside the F(1) region and a stationary peripheral stalk. During catalysis, ATP synthesis in the catalytic domain of F(1) is coupled via a rotary mechanism of the central stalk subunits to proton translocation. In vivo, can only synthesize ATP although its ATP hydrolase activity can be activated artificially in vitro. Part of the complex F(0) domain. The polypeptide is ATP synthase F(0) complex subunit 8 (Homo sapiens (Human)).